The primary structure comprises 94 residues: Pyrimidine/purine nucleoside phosphorylase (94 aa).

It belongs to the nucleoside phosphorylase PpnP family.

It catalyses the reaction a purine D-ribonucleoside + phosphate = a purine nucleobase + alpha-D-ribose 1-phosphate. The catalysed reaction is adenosine + phosphate = alpha-D-ribose 1-phosphate + adenine. It carries out the reaction cytidine + phosphate = cytosine + alpha-D-ribose 1-phosphate. The enzyme catalyses guanosine + phosphate = alpha-D-ribose 1-phosphate + guanine. It catalyses the reaction inosine + phosphate = alpha-D-ribose 1-phosphate + hypoxanthine. The catalysed reaction is thymidine + phosphate = 2-deoxy-alpha-D-ribose 1-phosphate + thymine. It carries out the reaction uridine + phosphate = alpha-D-ribose 1-phosphate + uracil. The enzyme catalyses xanthosine + phosphate = alpha-D-ribose 1-phosphate + xanthine. Its function is as follows. Catalyzes the phosphorolysis of diverse nucleosides, yielding D-ribose 1-phosphate and the respective free bases. Can use uridine, adenosine, guanosine, cytidine, thymidine, inosine and xanthosine as substrates. Also catalyzes the reverse reactions. This is Pyrimidine/purine nucleoside phosphorylase from Salmonella agona (strain SL483).